Consider the following 337-residue polypeptide: 2-oxoglutarate-dependent ethylene/succinate-forming enzyme (337 aa).

The 121-residue stretch at 166–286 (GWHHMRVLRF…RFACAYFHEP (121 aa)) folds into the Fe2OG dioxygenase domain. Positions 189 and 268 each coordinate Fe cation.

It belongs to the iron/ascorbate-dependent oxidoreductase family. Monomer. Requires Fe(2+) as cofactor.

It catalyses the reaction 2-oxoglutarate + O2 + 2 H(+) = ethene + 3 CO2 + H2O. It carries out the reaction L-arginine + 2-oxoglutarate + O2 = guanidine + L-glutamate 5-semialdehyde + succinate + CO2. It functions in the pathway alkene biosynthesis; ethylene biosynthesis via 2-oxoglutarate. Simultaneously catalyzes two reactions, namely formation of ethylene and of succinate from 2-oxoglutarate. In Pseudomonas syringae pv. pisi, this protein is 2-oxoglutarate-dependent ethylene/succinate-forming enzyme (efe).